The following is a 278-amino-acid chain: 4-diphosphocytidyl-2-C-methyl-D-erythritol kinase (278 aa).

The active site involves lysine 9. 89-99 is an ATP binding site; that stretch reads PVASGIGGGSA. Aspartate 128 is a catalytic residue.

This sequence belongs to the GHMP kinase family. IspE subfamily.

It carries out the reaction 4-CDP-2-C-methyl-D-erythritol + ATP = 4-CDP-2-C-methyl-D-erythritol 2-phosphate + ADP + H(+). The protein operates within isoprenoid biosynthesis; isopentenyl diphosphate biosynthesis via DXP pathway; isopentenyl diphosphate from 1-deoxy-D-xylulose 5-phosphate: step 3/6. Functionally, catalyzes the phosphorylation of the position 2 hydroxy group of 4-diphosphocytidyl-2C-methyl-D-erythritol. The chain is 4-diphosphocytidyl-2-C-methyl-D-erythritol kinase from Cereibacter sphaeroides (strain ATCC 17025 / ATH 2.4.3) (Rhodobacter sphaeroides).